A 1357-amino-acid polypeptide reads, in one-letter code: Protein CFT1 (1357 aa).

The tract at residues 445–465 (TREAHNPSSGTNSLMDINDDD) is disordered. Over residues 450–459 (NPSSGTNSLM) the composition is skewed to polar residues.

The protein belongs to the CFT1 family. As to quaternary structure, component of the cleavage and polyadenylation factor (CPF) complex, which is composed of at least PTI1, SYC1, SSU72, GLC7, MPE1, REF2, PFS2, PTA1, YSH1/BRR5, SWD2, CFT2/YDH1, YTH1, CFT1/YHH1, FIP1 and PAP1. Interacts with the phosphorylated CTD domain of RPB1/RNA polymerase II.

The protein localises to the nucleus. In terms of biological role, RNA-binding component of the cleavage and polyadenylation factor (CPF) complex, which plays a key role in polyadenylation-dependent pre-mRNA 3'-end formation and cooperates with cleavage factors including the CFIA complex and NAB4/CFIB. Involved in poly(A) site recognition. May be involved in coupling transcription termination and mRNA 3'-end formation. The protein is Protein CFT1 (CFT1) of Saccharomyces cerevisiae (strain ATCC 204508 / S288c) (Baker's yeast).